The sequence spans 274 residues: 2,3,4,5-tetrahydropyridine-2,6-dicarboxylate N-succinyltransferase (274 aa).

Substrate-binding residues include Arg-106 and Asp-143.

The protein belongs to the transferase hexapeptide repeat family. Homotrimer.

The protein resides in the cytoplasm. The enzyme catalyses (S)-2,3,4,5-tetrahydrodipicolinate + succinyl-CoA + H2O = (S)-2-succinylamino-6-oxoheptanedioate + CoA. Its pathway is amino-acid biosynthesis; L-lysine biosynthesis via DAP pathway; LL-2,6-diaminopimelate from (S)-tetrahydrodipicolinate (succinylase route): step 1/3. In Paracidovorax citrulli (strain AAC00-1) (Acidovorax citrulli), this protein is 2,3,4,5-tetrahydropyridine-2,6-dicarboxylate N-succinyltransferase.